We begin with the raw amino-acid sequence, 307 residues long: tRNA dimethylallyltransferase (307 aa).

9-16 is an ATP binding site; sequence GATGTGKS. Substrate is bound at residue 11–16; the sequence is TGTGKS.

The protein belongs to the IPP transferase family. Monomer. Mg(2+) serves as cofactor.

It carries out the reaction adenosine(37) in tRNA + dimethylallyl diphosphate = N(6)-dimethylallyladenosine(37) in tRNA + diphosphate. Catalyzes the transfer of a dimethylallyl group onto the adenine at position 37 in tRNAs that read codons beginning with uridine, leading to the formation of N6-(dimethylallyl)adenosine (i(6)A). This is tRNA dimethylallyltransferase from Clavibacter sepedonicus (Clavibacter michiganensis subsp. sepedonicus).